Here is a 245-residue protein sequence, read N- to C-terminus: tRNA pseudouridine synthase A (245 aa).

Aspartate 52 (nucleophile) is an active-site residue. Substrate is bound at residue tyrosine 111.

The protein belongs to the tRNA pseudouridine synthase TruA family. In terms of assembly, homodimer.

The enzyme catalyses uridine(38/39/40) in tRNA = pseudouridine(38/39/40) in tRNA. Functionally, formation of pseudouridine at positions 38, 39 and 40 in the anticodon stem and loop of transfer RNAs. The sequence is that of tRNA pseudouridine synthase A from Rickettsia canadensis (strain McKiel).